The chain runs to 302 residues: Heme A synthase (302 aa).

Over 1-8 the chain is Cytoplasmic; it reads MFRKQNLK. A helical membrane pass occupies residues 9–29; sequence WLGVLATIIMTFVQLGGALVT. Over 30-67 the chain is Extracellular; it reads KTGSEDGCGSSWPLCNGALLPENLPIQTIIELSHRAVS. A disulfide bridge connects residues cysteine 37 and cysteine 44. Glutamate 60 is an active-site residue. A heme o-binding site is contributed by histidine 63. Residues 68-88 traverse the membrane as a helical segment; it reads AISLIVVLWLVITAWKNIGYI. Topologically, residues 89–93 are cytoplasmic; that stretch reads KEIKP. Residues 94 to 114 form a helical membrane-spanning segment; sequence LSIISVGFLLVQALVGAAAVI. Residues 115 to 125 are Extracellular-facing; that stretch reads WQQNPYVLALH. Histidine 125 serves as a coordination point for heme o. Residues 126-146 form a helical membrane-spanning segment; sequence FGISLISFSSVFLMTLIIFSI. The Cytoplasmic portion of the chain corresponds to 147-161; that stretch reads DKKYEADILFIHKPL. The chain crosses the membrane as a helical span at residues 162-182; it reads RILTWLMAIIVYLTIYTGALV. The Extracellular segment spans residues 183–215; that stretch reads RHTKSSLAYGAWPIPFDDIVPHNAHDWVQFSHR. Residue histidine 214 coordinates heme b. Residues 216–236 form a helical membrane-spanning segment; sequence GMAFITFIWIMITFIHAIKNY. Over 237 to 244 the chain is Cytoplasmic; sequence SDNRTVRY. A helical transmembrane segment spans residues 245–265; the sequence is GYTASFILVILQVITGALSVI. Residues 266–270 are Extracellular-facing; that stretch reads TNVNL. The chain crosses the membrane as a helical span at residues 271–291; sequence IIALFHALFITYLFGMIAYFI. Heme b is bound at residue histidine 276. At 292–302 the chain is on the cytoplasmic side; that stretch reads LLMLRTTRSLK.

Belongs to the COX15/CtaA family. Type 1 subfamily. As to quaternary structure, interacts with CtaB. Heme b serves as cofactor.

The protein localises to the cell membrane. It catalyses the reaction Fe(II)-heme o + 2 A + H2O = Fe(II)-heme a + 2 AH2. Its pathway is porphyrin-containing compound metabolism; heme A biosynthesis; heme A from heme O: step 1/1. Functionally, catalyzes the conversion of heme O to heme A by two successive hydroxylations of the methyl group at C8. The first hydroxylation forms heme I, the second hydroxylation results in an unstable dihydroxymethyl group, which spontaneously dehydrates, resulting in the formyl group of heme A. This Staphylococcus epidermidis (strain ATCC 12228 / FDA PCI 1200) protein is Heme A synthase.